Reading from the N-terminus, the 286-residue chain is E3 ubiquitin-protein ligase RNF170 (286 aa).

Topologically, residues methionine 1–aspartate 52 are lumenal. The chain crosses the membrane as a helical span at residues glutamine 53–leucine 73. At arginine 74–arginine 229 the chain is on the cytoplasmic side. Residues cysteine 115–arginine 158 form an RING-type zinc finger. A helical transmembrane segment spans residues isoleucine 230 to glutamate 250. Alanine 251 is a topological domain (lumenal). The helical transmembrane segment at leucine 252–isoleucine 272 threads the bilayer. Residues serine 273–arginine 286 are Cytoplasmic-facing.

As to quaternary structure, constitutively associated with the ERLIN1/ERLIN 2 complex. Interacts with activated ITPR1.

Its subcellular location is the endoplasmic reticulum membrane. The catalysed reaction is S-ubiquitinyl-[E2 ubiquitin-conjugating enzyme]-L-cysteine + [acceptor protein]-L-lysine = [E2 ubiquitin-conjugating enzyme]-L-cysteine + N(6)-ubiquitinyl-[acceptor protein]-L-lysine.. The protein operates within protein modification; protein ubiquitination. Functionally, E3 ubiquitin-protein ligase that plays an essential role in stimulus-induced inositol 1,4,5-trisphosphate receptor type 1 (ITPR1) ubiquitination and degradation via the endoplasmic reticulum-associated degradation (ERAD) pathway. Also involved in ITPR1 turnover in resting cells. Selectively inhibits the TLR3-triggered innate immune response by promoting the 'Lys-48'-linked polyubiquitination and degradation of TLR3. The protein is E3 ubiquitin-protein ligase RNF170 (Rnf170) of Mus musculus (Mouse).